A 317-amino-acid polypeptide reads, in one-letter code: Serpentine receptor class delta-26 (317 aa).

7 consecutive transmembrane segments (helical) span residues 5–25, 38–58, 83–103, 122–142, 176–196, 227–247, and 258–278; these read LLHT…MYLA, AIIT…FFVM, ACYV…IWMI, SLVF…AAWI, ITLI…YAWI, FQVF…AMFG, and LVSI…ILFV.

It belongs to the nematode receptor-like protein srd family.

It is found in the membrane. This is Serpentine receptor class delta-26 (srd-26) from Caenorhabditis elegans.